Here is a 185-residue protein sequence, read N- to C-terminus: Ribosome-recycling factor (185 aa).

This sequence belongs to the RRF family.

Its subcellular location is the cytoplasm. In terms of biological role, responsible for the release of ribosomes from messenger RNA at the termination of protein biosynthesis. May increase the efficiency of translation by recycling ribosomes from one round of translation to another. The sequence is that of Ribosome-recycling factor from Shewanella oneidensis (strain ATCC 700550 / JCM 31522 / CIP 106686 / LMG 19005 / NCIMB 14063 / MR-1).